The primary structure comprises 448 residues: Ribosomal protein uS12 methylthiotransferase RimO (448 aa).

The region spanning 7 to 123 is the MTTase N-terminal domain; that stretch reads EKVSLVSLGC…IAEIIAEKEG (117 aa). 6 residues coordinate [4Fe-4S] cluster: C16, C52, C86, C161, C165, and C168. The Radical SAM core domain occupies 147–377; it reads SSPYYTAYLK…MRTQARVSFK (231 aa). One can recognise a TRAM domain in the interval 380–448; the sequence is RSLVDTEELV…DYDLIGEIVP (69 aa).

Belongs to the methylthiotransferase family. RimO subfamily. [4Fe-4S] cluster serves as cofactor.

The protein resides in the cytoplasm. The catalysed reaction is L-aspartate(89)-[ribosomal protein uS12]-hydrogen + (sulfur carrier)-SH + AH2 + 2 S-adenosyl-L-methionine = 3-methylsulfanyl-L-aspartate(89)-[ribosomal protein uS12]-hydrogen + (sulfur carrier)-H + 5'-deoxyadenosine + L-methionine + A + S-adenosyl-L-homocysteine + 2 H(+). Functionally, catalyzes the methylthiolation of an aspartic acid residue of ribosomal protein uS12. This is Ribosomal protein uS12 methylthiotransferase RimO from Geotalea uraniireducens (strain Rf4) (Geobacter uraniireducens).